Reading from the N-terminus, the 554-residue chain is Developmental and secondary metabolism regulator ve-1 (554 aa).

Residues 31-230 form the Velvet domain; it reads GRKLWYSLRV…AEQGCRVRIR (200 aa). Positions 45–50 match the Nuclear localization signal motif; sequence LRARAC. Residues 166 to 175 show a composition bias toward basic and acidic residues; it reads TKEDKDKDPE. Disordered stretches follow at residues 166–190, 232–430, and 465–528; these read TKED…SFDF, DVRM…PHRL, and PRAY…VDDK. A compositionally biased stretch (polar residues) spans 276–292; it reads RSMSGSTERTPYSSISD. Pro residues-rich tracts occupy residues 363 to 372 and 485 to 494; these read SYPPPPPPHQ and LPPPPPPPPQ. The interval 455 to 487 is PEST; it reads SPSNMAAPPYPRAYSVSNSGGLTSAGGYNQLPP. A compositionally biased stretch (basic and acidic residues) spans 500–528; that stretch reads RAHDQTFRADPEMRRYQDGARERESVDDK.

Belongs to the velvet family. VeA subfamily. In terms of assembly, component of the heterotrimeric velvet complex composed of lae-1, ve-1 and vel-2; Ve-1 acting as a bridging protein between lae-1 and vel-2.

Its subcellular location is the nucleus. The protein localises to the cytoplasm. Functionally, component of the velvet transcription factor complex that controls sexual/asexual developmental ratio in response to light, promoting sexual development in the darkness while stimulating asexual sporulation under illumination. The velvet complex hat acts as a global regulator for secondary metabolite gene expression. The polypeptide is Developmental and secondary metabolism regulator ve-1 (Neurospora crassa (strain ATCC 24698 / 74-OR23-1A / CBS 708.71 / DSM 1257 / FGSC 987)).